The primary structure comprises 94 residues: Co-chaperonin GroES (94 aa).

The protein belongs to the GroES chaperonin family. As to quaternary structure, heptamer of 7 subunits arranged in a ring. Interacts with the chaperonin GroEL.

Its subcellular location is the cytoplasm. In terms of biological role, together with the chaperonin GroEL, plays an essential role in assisting protein folding. The GroEL-GroES system forms a nano-cage that allows encapsulation of the non-native substrate proteins and provides a physical environment optimized to promote and accelerate protein folding. GroES binds to the apical surface of the GroEL ring, thereby capping the opening of the GroEL channel. The chain is Co-chaperonin GroES from Streptococcus pneumoniae serotype 19F (strain G54).